Here is a 244-residue protein sequence, read N- to C-terminus: Putative nucleosome assembly protein C36B7.08c (244 aa).

The interval 199-244 (EAMTEEASDEDESVDLEEDEEEEDEEDEEGDEEKQEPPSKKSKKSN) is disordered. Positions 201-232 (MTEEASDEDESVDLEEDEEEEDEEDEEGDEEK) are enriched in acidic residues. At S211 the chain carries Phosphoserine.

This sequence belongs to the nucleosome assembly protein (NAP) family.

It localises to the nucleus. In Schizosaccharomyces pombe (strain 972 / ATCC 24843) (Fission yeast), this protein is Putative nucleosome assembly protein C36B7.08c.